Here is a 368-residue protein sequence, read N- to C-terminus: WD repeat-containing protein wdr-5.1 (368 aa).

The tract at residues 1-64 (MDPAQNQPNT…APTTSQESTI (64 aa)) is disordered. Positions 16-42 (PAVEEAQGVNNSEAEAPAPAALSSVSP) are enriched in low complexity. WD repeat units follow at residues 77-116 (GHTK…CERT), 119-158 (GHKL…MAKT), 161-200 (GHTN…CVKT), 203-242 (AHSD…CVKT), 246-285 (DENP…TLKQ), 288-330 (GHEN…VVQS), and 333-368 (GHTQ…RSDS).

The sequence is that of WD repeat-containing protein wdr-5.1 from Caenorhabditis briggsae.